Consider the following 153-residue polypeptide: 6,7-dimethyl-8-ribityllumazine synthase (153 aa).

Residues phenylalanine 21, 55–57 (AFE), and 79–81 (TVI) each bind 5-amino-6-(D-ribitylamino)uracil. 84 to 85 (AT) serves as a coordination point for (2S)-2-hydroxy-3-oxobutyl phosphate. Catalysis depends on histidine 87, which acts as the Proton donor. Phenylalanine 112 provides a ligand contact to 5-amino-6-(D-ribitylamino)uracil. Arginine 126 contacts (2S)-2-hydroxy-3-oxobutyl phosphate.

This sequence belongs to the DMRL synthase family. As to quaternary structure, forms an icosahedral capsid composed of 60 subunits, arranged as a dodecamer of pentamers.

It carries out the reaction (2S)-2-hydroxy-3-oxobutyl phosphate + 5-amino-6-(D-ribitylamino)uracil = 6,7-dimethyl-8-(1-D-ribityl)lumazine + phosphate + 2 H2O + H(+). It functions in the pathway cofactor biosynthesis; riboflavin biosynthesis; riboflavin from 2-hydroxy-3-oxobutyl phosphate and 5-amino-6-(D-ribitylamino)uracil: step 1/2. Functionally, catalyzes the formation of 6,7-dimethyl-8-ribityllumazine by condensation of 5-amino-6-(D-ribitylamino)uracil with 3,4-dihydroxy-2-butanone 4-phosphate. This is the penultimate step in the biosynthesis of riboflavin. This is 6,7-dimethyl-8-ribityllumazine synthase from Bacillus cereus (strain ATCC 10987 / NRS 248).